The sequence spans 239 residues: Proteasome activator complex subunit 2 (239 aa).

A2 carries the post-translational modification N-acetylalanine. S10 carries the phosphoserine modification. Residues 65-86 (DIPIPDPPPKDDEMETDKQEKK) are disordered. Over residues 72–86 (PPKDDEMETDKQEKK) the composition is skewed to basic and acidic residues.

Belongs to the PA28 family. Heterodimer of PSME1 and PSME2, which forms a hexameric ring.

Functionally, implicated in immunoproteasome assembly and required for efficient antigen processing. The PA28 activator complex enhances the generation of class I binding peptides by altering the cleavage pattern of the proteasome. This chain is Proteasome activator complex subunit 2 (PSME2), found in Sus scrofa (Pig).